The primary structure comprises 205 residues: Anaerobic dimethyl sulfoxide reductase chain B (205 aa).

4Fe-4S ferredoxin-type domains follow at residues 5–33 (YGFF…LTPE), 59–89 (FAYY…KRED), and 90–119 (GFVV…YNET). [4Fe-4S] cluster is bound by residues Cys-14, Cys-17, Cys-20, Cys-24, Cys-67, Cys-70, Cys-75, Cys-79, Cys-99, Cys-102, Cys-105, Cys-109, Cys-126, Cys-129, Cys-141, and Cys-145. Residues 184 to 205 (KPNANSRPTGDTTGYLANPKEV) are disordered. Residues 186–195 (NANSRPTGDT) show a composition bias toward polar residues.

As to quaternary structure, heterotrimeric enzyme composed of a catalytic heterodimer (DmsAB) and a membrane anchor protein (DmsC). The cofactor is [4Fe-4S] cluster.

Functionally, electron transfer subunit of the terminal reductase during anaerobic growth on various sulfoxide and N-oxide compounds. This chain is Anaerobic dimethyl sulfoxide reductase chain B (dmsB), found in Shigella flexneri.